Here is a 418-residue protein sequence, read N- to C-terminus: Cell division protein FtsA (418 aa).

The protein belongs to the FtsA/MreB family. As to quaternary structure, self-interacts. Interacts with FtsZ.

It localises to the cell inner membrane. In terms of biological role, cell division protein that is involved in the assembly of the Z ring. May serve as a membrane anchor for the Z ring. In Buchnera aphidicola subsp. Acyrthosiphon pisum (strain APS) (Acyrthosiphon pisum symbiotic bacterium), this protein is Cell division protein FtsA.